A 354-amino-acid polypeptide reads, in one-letter code: MPSLQVIRAAVAELPQGSSIVAAVAGGTTGIGSYLAKALATTFASHGSKLRVYIVGRNAGRAKTVISECQKISPGSDWRFIHATDLALISEVDKSSAEIIKQETEAPFHGELARLDLLYMTHAIPILGHKRTTEEGLDALESTIYYSRIRFILQLLPLLTASPRVAHVISVYAGGMENGVKPDEEPIGFVPAEIYHFNTVRKYTTFMKTFVFEELAEKYAERLSLIHIYPGLVDGPGFTQMPRWFRVLFTLMKPLTSLYMTRSEDCGMVMAYLATSRFSAKGSGQDAPTSTDTLAPKSSLGVVGGGAYSLGQRADSQTPQIMFEKSRKPDTSKKAWDHTIRTLDDIAKKNATIA.

NADP(+) contacts are provided by I31, D85, R201, and V233.

It belongs to the short-chain dehydrogenases/reductases (SDR) family.

Its pathway is mycotoxin biosynthesis. Functionally, short-chain dehydrogenase/reductase; part of the satratoxin SC1 cluster involved in the biosynthesis of satratoxins, trichothecene mycotoxins that are associated with human food poisonings. Satratoxins are suggested to be made by products of multiple gene clusters (SC1, SC2 and SC3) that encode 21 proteins in all, including polyketide synthases, acetyltransferases, and other enzymes expected to modify the trichothecene skeleton. SC1 encodes 10 proteins, SAT1 to SAT10. The largest are SAT8, which encodes a putative polyketide synthase (PKS) with a conventional non-reducing architecture, and SAT10, a putative protein containing four ankyrin repeats and thus may be involved in protein scaffolding. The putative short-chain reductase SAT3 may assist the PKS in some capacity. SAT6 contains a secretory lipase domain and acts probably as a trichothecene esterase. SAT5 encodes a putative acetyltransferase, and so, with SAT6, may affect endogenous protection from toxicity. The probable transcription factor SAT9 may regulate the expression of the SC1 cluster. SC2 encodes proteins SAT11 to SAT16, the largest of which encodes the putative reducing PKS SAT13. SAT11 is a cytochrome P450 monooxygenase, while SAT14 and SAT16 are probable acetyltransferases. The SC2 cluster may be regulated by the transcription factor SAT15. SC3 is a small cluster that encodes 5 proteins, SAT17 to SAT21. SAT21 is a putative MFS-type transporter which may have a role in exporting secondary metabolites. The four other proteins putatively encoded in SC3 include the taurine hydroxylase-like protein SAT17, the O-methyltransferase SAT18, the acetyltransferase SAT19, and the Cys6-type zinc finger SAT20, the latter being probably involved in regulation of SC3 expression. The polypeptide is Short-chain dehydrogenase/reductase SAT2 (Stachybotrys chartarum (strain CBS 109288 / IBT 7711) (Toxic black mold)).